Reading from the N-terminus, the 931-residue chain is Isoleucine--tRNA ligase (931 aa).

Residues 57-67 (PFANGNIHMGH) carry the 'HIGH' region motif. An L-isoleucyl-5'-AMP-binding site is contributed by Glu-556. A 'KMSKS' region motif is present at residues 597-601 (KMSKS). Residue Lys-600 coordinates ATP. Residues Cys-890, Cys-893, Cys-910, and Cys-913 each coordinate Zn(2+).

This sequence belongs to the class-I aminoacyl-tRNA synthetase family. IleS type 1 subfamily. As to quaternary structure, monomer. Requires Zn(2+) as cofactor.

The protein localises to the cytoplasm. The enzyme catalyses tRNA(Ile) + L-isoleucine + ATP = L-isoleucyl-tRNA(Ile) + AMP + diphosphate. Its function is as follows. Catalyzes the attachment of isoleucine to tRNA(Ile). As IleRS can inadvertently accommodate and process structurally similar amino acids such as valine, to avoid such errors it has two additional distinct tRNA(Ile)-dependent editing activities. One activity is designated as 'pretransfer' editing and involves the hydrolysis of activated Val-AMP. The other activity is designated 'posttransfer' editing and involves deacylation of mischarged Val-tRNA(Ile). This is Isoleucine--tRNA ligase from Lactobacillus delbrueckii subsp. bulgaricus (strain ATCC BAA-365 / Lb-18).